A 233-amino-acid chain; its full sequence is Large ribosomal subunit protein uL1 (233 aa).

This sequence belongs to the universal ribosomal protein uL1 family. In terms of assembly, part of the 50S ribosomal subunit.

In terms of biological role, binds directly to 23S rRNA. The L1 stalk is quite mobile in the ribosome, and is involved in E site tRNA release. Functionally, protein L1 is also a translational repressor protein, it controls the translation of the L11 operon by binding to its mRNA. This chain is Large ribosomal subunit protein uL1, found in Proteus mirabilis (strain HI4320).